Reading from the N-terminus, the 822-residue chain is von Willebrand factor A domain-containing protein 5A (822 aa).

Residues 1 to 131 (MEHHWGLITG…KVAVTLRYVQ (131 aa)) enclose the VIT domain. One can recognise a VWFA domain in the interval 281-469 (EFVFLMDRSG…LALQCALDDI (189 aa)). A disordered region spans residues 657-682 (SMPSPAPIENQGVADSSNEKSNSQNE). Polar residues predominate over residues 669 to 680 (VADSSNEKSNSQ).

Functionally, may play a role in tumorigenesis as a tumor suppressor. Altered expression of this protein and disruption of the molecular pathway it is involved in may contribute directly to or modify tumorigenesis. This is von Willebrand factor A domain-containing protein 5A (Vwa5a) from Rattus norvegicus (Rat).